Consider the following 378-residue polypeptide: Sperm microtubule associated protein 2 (378 aa).

Disordered regions lie at residues 1–35 and 47–79; these read MGEL…SDGS and WLQS…LPEV. Positions 47–56 are enriched in polar residues; sequence WLQSSQATTE. The span at 61-77 shows a compositional bias: acidic residues; that stretch reads DPEEEIPPEEMVGEELP. THEG repeat units lie at residues 113–132, 179–198, 217–236, 253–272, 285–304, 321–340, and 355–374; these read AKCR…PKFN, TITV…PKRF, STLE…PKIR, AAQM…PRAP, PKPY…PKAL, VTKN…PKIR, and ASLV…PKHI. Residue Ser-290 is modified to Phosphoserine.

As to quaternary structure, interacts with CCT5.

Its subcellular location is the nucleus. In terms of biological role, may be involved (but not essential) in spermatogenesis. The chain is Sperm microtubule associated protein 2 from Rattus norvegicus (Rat).